Reading from the N-terminus, the 801-residue chain is Probable methionine--tRNA ligase (801 aa).

A 'HIGH' region motif is present at residues 25-35; that stretch reads PYVNNVPHLGN. The 'KMSKS' region motif lies at 347–351; it reads KFSKS. K350 is an ATP binding site. The segment at 606-633 is disordered; that stretch reads DKLKGTKLSDGGQKKEQKKQSGGSKSKN. The 104-residue stretch at 639–742 folds into the tRNA-binding domain; that stretch reads TVAKLDIRVG…ESAAVGERVT (104 aa).

Belongs to the class-I aminoacyl-tRNA synthetase family.

The protein localises to the cytoplasm. The catalysed reaction is tRNA(Met) + L-methionine + ATP = L-methionyl-tRNA(Met) + AMP + diphosphate. The polypeptide is Probable methionine--tRNA ligase (Oryza sativa subsp. japonica (Rice)).